The sequence spans 141 residues: Translation initiation factor 2 subunit beta (141 aa).

It belongs to the eIF-2-beta/eIF-5 family. Heterotrimer composed of an alpha, a beta and a gamma chain.

In terms of biological role, eIF-2 functions in the early steps of protein synthesis by forming a ternary complex with GTP and initiator tRNA. The polypeptide is Translation initiation factor 2 subunit beta (Thermofilum pendens (strain DSM 2475 / Hrk 5)).